The following is a 404-amino-acid chain: Ubiquitin-like modifier-activating enzyme 5 (404 aa).

S45 is modified (phosphoserine). G83, D104, K127, N150, and N184 together coordinate ATP. Zn(2+) contacts are provided by C226 and C229. Catalysis depends on C250, which acts as the Glycyl thioester intermediate. Residues C303 and C308 each coordinate Zn(2+). The UFM1-interacting sequence (UIS) signature appears at I334–V346. The linker stretch occupies residues S347 to K377. 2 positions are modified to phosphoserine: S358 and S393. The UFC1-binding sequence (UFC) motif lies at D389 to M404.

Belongs to the ubiquitin-activating E1 family. UBA5 subfamily. As to quaternary structure, homodimer; homodimerization is required for UFM1 activation. Interacts (via UIS motif) with UFM1; binds UFM1 via a trans-binding mechanism in which UFM1 interacts with distinct sites in both subunits of the UBA5 homodimer. Interacts (via C-terminus) with UFC1. Interacts (via UIS motif) with GABARAPL2 and, with lower affinity, with GABARAP and GABARAPL1.

Its subcellular location is the cytoplasm. It localises to the nucleus. The protein resides in the endoplasmic reticulum membrane. The protein localises to the golgi apparatus. E1-like enzyme which specifically catalyzes the first step in ufmylation. Activates UFM1 by first adenylating its C-terminal glycine residue with ATP, and thereafter linking this residue to the side chain of a cysteine residue in E1, yielding a UFM1-E1 thioester and free AMP. Activates UFM1 via a trans-binding mechanism, in which UFM1 interacts with distinct sites in both subunits of the UBA5 homodimer. Trans-binding also promotes stabilization of the UBA5 homodimer, and enhances ATP-binding. Transfer of UFM1 from UBA5 to the E2-like enzyme UFC1 also takes place using a trans mechanism. Ufmylation plays a key role in various processes, such as ribosome recycling, response to DNA damage, interferon response or reticulophagy (also called ER-phagy). Ufmylation is essential for erythroid differentiation of both megakaryocytes and erythrocytes. In Pongo abelii (Sumatran orangutan), this protein is Ubiquitin-like modifier-activating enzyme 5.